The sequence spans 292 residues: MLSGSIVALLTPFKADGEVDFDGLQKLVEYHIAAGTNGIVAVGTTGESSTLTVEEHVKVVNKTVEFVNGRIPVIAGTGANATHESVTFSRLLNDSGIDACLSVTPYYNKPTQEGLFQHYKAIAEVSNVPQILYNVPGRTAVDLLPETVARLAELENIVALKDATGDLNRVAIHRELCGEDFILLSGDDATGLDFVKLGGQGVISVTNNIAAKDMADMFRLALEGRFEEAEVINQRLMPLHKNLFIESSPIPVKWAATQLGLIECGHLRLPLTELSEKCHPIVAQAMTDAGIY.

Thr45 provides a ligand contact to pyruvate. Tyr133 serves as the catalytic Proton donor/acceptor. The active-site Schiff-base intermediate with substrate is Lys161. Ile203 is a pyruvate binding site.

Belongs to the DapA family. Homotetramer; dimer of dimers.

The protein localises to the cytoplasm. It carries out the reaction L-aspartate 4-semialdehyde + pyruvate = (2S,4S)-4-hydroxy-2,3,4,5-tetrahydrodipicolinate + H2O + H(+). Its pathway is amino-acid biosynthesis; L-lysine biosynthesis via DAP pathway; (S)-tetrahydrodipicolinate from L-aspartate: step 3/4. In terms of biological role, catalyzes the condensation of (S)-aspartate-beta-semialdehyde [(S)-ASA] and pyruvate to 4-hydroxy-tetrahydrodipicolinate (HTPA). The protein is 4-hydroxy-tetrahydrodipicolinate synthase of Vibrio vulnificus (strain YJ016).